A 181-amino-acid chain; its full sequence is Small ribosomal subunit protein cS23 (181 aa).

The segment at 1 to 40 (MLPMSVHPATTPALASRPRVSLPRPSTPSSSSSLVHLKSR) is disordered. Residues 14 to 36 (LASRPRVSLPRPSTPSSSSSLVH) are compositionally biased toward low complexity.

Belongs to the chloroplast-specific ribosomal protein cS23 family. As to quaternary structure, part of the 30S ribosomal subunit.

It is found in the plastid. It localises to the chloroplast. Component of the chloroplast ribosome (chloro-ribosome), a dedicated translation machinery responsible for the synthesis of chloroplast genome-encoded proteins, including proteins of the transcription and translation machinery and components of the photosynthetic apparatus. This Hordeum vulgare (Barley) protein is Small ribosomal subunit protein cS23 (PSRP3).